The sequence spans 296 residues: Short-chain dehydrogenase/reductase ascJ (296 aa).

NADP(+) contacts are provided by isoleucine 28, aspartate 66, and asparagine 93. Serine 155 serves as the catalytic Proton donor. The NADP(+) site is built by tyrosine 168, lysine 172, and threonine 205. The active-site Proton acceptor is the tyrosine 168. The Lowers pKa of active site Tyr role is filled by lysine 172.

It belongs to the short-chain dehydrogenases/reductases (SDR) family.

The catalysed reaction is ascofuranol + A = ascofuranone + AH2. It participates in secondary metabolite biosynthesis; terpenoid biosynthesis. Its function is as follows. Short-chain dehydrogenase/reductase; part of the asc-2 gene cluster that mediates the biosynthesis of ascofuranone, a strong inhibitor of cyanide-insensitive alternative oxidases and a promising drug candidate against African trypanosomiasis. The first step in the pathway is performed by the non-reducing polyketide synthase ascC that produces orsellinic acid by condensing acetyl-CoA with 3 malonyl-CoA units. Orsellinic acid is then prenylated by the prenyltransferase ascA to yield ilicicolinic acid B. Ilicicolinic acid B is further reduced to ilicicolin B by the reductase ascB. The halogenase ascD then chlorinates ilicicolin B to produce ilicicolin A which is converted to ilicicolin A epoxide by the cytochrome P450 monooxygenase ascE that catalyzes stereoselective epoxidation of the terminal double bond of the prenyl group. Ilicicolin A epoxide is the last common precursor for the biosynthesis of ascofuranone and ascochlorin. The terpene cyclase ascF produces a monocyclic terpene, and the cyclization reaction is proposed to be initiated by protonation of the terminal epoxide of ilicicolin A epoxide to generate a monocyclic tertiarycation, which is followed by a series of hydride and methyl shifts with abstraction of proton, leading to the formation of the (14S,15R,19R)-trimethylcyclohexanone ring structure of ilicicolin C, which is finally reduced to ascochlorin by the dehydrogenase ascG. On the other hand, ilicicolin A epoxide is hydroxylated by the cytochrome P450 monooxygenase ascH, and the resultant product is cyclized by the terpene cyclase ascI to ascofuranol via protonation-initiated epoxide ring opening, which facilitates the 6-endo-tet cyclization to form the tetrahy-drofuran ring. Finally, ascofuranol is oxidized into ascofuranone by ascJ. This Acremonium egyptiacum (Oospora egyptiaca) protein is Short-chain dehydrogenase/reductase ascJ.